Reading from the N-terminus, the 548-residue chain is Glucose-6-phosphate isomerase (548 aa).

The Proton donor role is filled by Glu-353. Residues His-384 and Lys-512 contribute to the active site.

It belongs to the GPI family.

The protein localises to the cytoplasm. The enzyme catalyses alpha-D-glucose 6-phosphate = beta-D-fructose 6-phosphate. It functions in the pathway carbohydrate biosynthesis; gluconeogenesis. Its pathway is carbohydrate degradation; glycolysis; D-glyceraldehyde 3-phosphate and glycerone phosphate from D-glucose: step 2/4. Catalyzes the reversible isomerization of glucose-6-phosphate to fructose-6-phosphate. The sequence is that of Glucose-6-phosphate isomerase from Pseudoalteromonas translucida (strain TAC 125).